A 256-amino-acid polypeptide reads, in one-letter code: UstYa family oxidase phomYc (256 aa).

A helical transmembrane segment spans residues 38-58; sequence LVLVLQFVLIISLLASLHILG. Asparagine 64 and asparagine 132 each carry an N-linked (GlcNAc...) asparagine glycan. Residues 158-162 carry the HXXHC 1 motif; sequence HQLHC. Residue asparagine 179 is glycosylated (N-linked (GlcNAc...) asparagine). Residues 193–197 carry the HXXHC 2 motif; it reads HIDHC.

This sequence belongs to the ustYa family.

It localises to the membrane. The protein operates within mycotoxin biosynthesis. UstYa family oxidase; part of the gene cluster that mediates the biosynthesis of the phomopsins, a group of hexapeptide mycotoxins which infects lupins and causes lupinosis disease in livestock. Within the pathway, phomYc catalyzes the desaturation of the Ile moiety into 2,3-dehydroisoleucine (dIle). The pathway starts with the processing of the precursor phomA by several endopeptidases including kexin proteases as well as the cluster-specific S41 family peptidase phomP1 and the oligopeptidase phomG to produce 10 identical copies of the hexapeptide Tyr-Val-Ile-Pro-Ile-Asp. After being excised from the precursor peptide, the core peptides are cyclized and modified post-translationally by enzymes encoded within the gene cluster. The timing and order of proteolysis of the phomA precursor and PTMs are still unknown. Two tyrosinase-like enzymes, phomQ1 and phomQ2, catalyze the chlorination and hydroxylation of Tyr, respectively. PhomYb, is proposed to be involved in the construction of the macrocyclic structure. The other 4 ustYa family proteins may be involved in PTMs that generate the unique structure of phomopsin A. PhomYa is required for the hydroxylation of C-beta of Tyr. PhomYc, phomYd, and phomYe are responsible for the biosynthesis of 2,3-dehydroisoleucine (dIle), 2,3-dehydroaspartic acid (dAsp), and 3,4-dehydroproline (dPro), respectively. While dIle formation by phomYc is indispensable for the installation of dAsp by phomYd, the order of the other PTMs have not been elucidated yet. Most of the biosynthetic enzymes likely have broad substrate specificity, and thus, there might be a metabolic grid from a precursor to phomopsin A. The enzyme(s) responsible for the biosynthesis of 3,4-dehydrovaline (dVal) have also not been identified yet. Finally, phomM acts as an S-adenosylmethionine-dependent alpha-N-methyltransferase that catalyzes two successive N-methylation reactions, converting N-desmethyl-phomopsin A to phomopsin A and phomopsin A further to an N,N-dimethylated congener called phomopsin E. This is UstYa family oxidase phomYc from Diaporthe leptostromiformis (Lupinosis disease fungus).